A 276-amino-acid polypeptide reads, in one-letter code: NH(3)-dependent NAD(+) synthetase (276 aa).

43–50 is a binding site for ATP; the sequence is GISGGVDS. Aspartate 49 contacts Mg(2+). Position 146 (arginine 146) interacts with deamido-NAD(+). Residue threonine 166 coordinates ATP. Glutamate 171 contributes to the Mg(2+) binding site. Deamido-NAD(+)-binding residues include lysine 179 and aspartate 186. ATP-binding residues include lysine 195 and threonine 217. 266 to 267 is a binding site for deamido-NAD(+); sequence HK.

This sequence belongs to the NAD synthetase family. In terms of assembly, homodimer.

The enzyme catalyses deamido-NAD(+) + NH4(+) + ATP = AMP + diphosphate + NAD(+) + H(+). It functions in the pathway cofactor biosynthesis; NAD(+) biosynthesis; NAD(+) from deamido-NAD(+) (ammonia route): step 1/1. Catalyzes the ATP-dependent amidation of deamido-NAD to form NAD. Uses ammonia as a nitrogen source. This is NH(3)-dependent NAD(+) synthetase from Aliivibrio fischeri (strain ATCC 700601 / ES114) (Vibrio fischeri).